We begin with the raw amino-acid sequence, 262 residues long: Small ribosomal subunit protein mS23 (262 aa).

Positions 242–254 are enriched in acidic residues; it reads AAEEQETSLDDDA. Positions 242–262 are disordered; sequence AAEEQETSLDDDATEKVAVAA.

Belongs to the mitochondrion-specific ribosomal protein mS23 family. Component of the mitochondrial small ribosomal subunit.

It is found in the mitochondrion. The sequence is that of Small ribosomal subunit protein mS23 (rsm25) from Aspergillus niger (strain ATCC MYA-4892 / CBS 513.88 / FGSC A1513).